A 129-amino-acid polypeptide reads, in one-letter code: M-zodatoxin-Lt8f (129 aa).

The first 20 residues, 1–20, serve as a signal peptide directing secretion; sequence MKYFVVALALVAAFACIAES. A propeptide spanning residues 21 to 60 is cleaved from the precursor; the sequence is KPAESEHELAEVEEENELADLEDAVWLEHLADLSDLEEAR. The Processing quadruplet motif motif lies at 57–60; sequence EEAR.

In terms of processing, cleavage of the propeptide depends on the processing quadruplet motif (XXXR, with at least one of X being E). As to expression, expressed by the venom gland.

It localises to the secreted. Functionally, insecticidal, cytolytic and antimicrobial peptide. Has insecticidal activity against the flesh fly S.carnaria. Has antibacterial activity against the Gram-negative bacteria E.coli. Forms voltage-dependent, ion-permeable channels in membranes. At high concentration causes cell membrane lysis. The sequence is that of M-zodatoxin-Lt8f (cit 1-7) from Lachesana tarabaevi (Spider).